The sequence spans 106 residues: A-type ATP synthase subunit F (106 aa).

This sequence belongs to the V-ATPase F subunit family. Has multiple subunits with at least A(3), B(3), C, D, E, F, H, I and proteolipid K(x).

Its subcellular location is the cell membrane. Its function is as follows. Component of the A-type ATP synthase that produces ATP from ADP in the presence of a proton gradient across the membrane. This Methanosphaera stadtmanae (strain ATCC 43021 / DSM 3091 / JCM 11832 / MCB-3) protein is A-type ATP synthase subunit F.